A 365-amino-acid chain; its full sequence is tRNA/tmRNA (uracil-C(5))-methyltransferase (365 aa).

S-adenosyl-L-methionine contacts are provided by glutamine 189, tyrosine 217, asparagine 222, glutamate 238, and aspartate 298. Cysteine 323 serves as the catalytic Nucleophile. Glutamate 357 acts as the Proton acceptor in catalysis.

It belongs to the class I-like SAM-binding methyltransferase superfamily. RNA M5U methyltransferase family. TrmA subfamily.

It catalyses the reaction uridine(54) in tRNA + S-adenosyl-L-methionine = 5-methyluridine(54) in tRNA + S-adenosyl-L-homocysteine + H(+). It carries out the reaction uridine(341) in tmRNA + S-adenosyl-L-methionine = 5-methyluridine(341) in tmRNA + S-adenosyl-L-homocysteine + H(+). Dual-specificity methyltransferase that catalyzes the formation of 5-methyluridine at position 54 (m5U54) in all tRNAs, and that of position 341 (m5U341) in tmRNA (transfer-mRNA). The chain is tRNA/tmRNA (uracil-C(5))-methyltransferase from Shewanella sp. (strain ANA-3).